The sequence spans 262 residues: Proline-rich protein 23C (262 aa).

2 disordered regions span residues 1–52 and 225–262; these read MGSR…AGTP and VPSS…LFQE. Residues 226 to 242 show a composition bias toward pro residues; the sequence is PSSPLQPLPPSPSPGPH. Basic and acidic residues predominate over residues 243-252; it reads ARPELPERPP. The segment covering 253 to 262 has biased composition (basic residues); the sequence is CKVRRRLFQE.

This sequence belongs to the PRR23 family.

This is Proline-rich protein 23C (PRR23C) from Homo sapiens (Human).